A 302-amino-acid chain; its full sequence is Putative 2-dehydro-3-deoxy-D-gluconate aldolase YagE (302 aa).

Active-site charge relay system residues include serine 49 and tyrosine 112. Residue tyrosine 138 is the Proton donor of the active site. Lysine 167 functions as the Schiff-base intermediate with substrate in the catalytic mechanism.

It belongs to the DapA family. In terms of assembly, a dimer of dimers.

The protein localises to the cytoplasm. It carries out the reaction 2-dehydro-3-deoxy-D-gluconate = D-glyceraldehyde + pyruvate. The catalysed reaction is 2-dehydro-3-deoxy-D-arabinonate = glycolaldehyde + pyruvate. In terms of biological role, catalyzes the formation of 2-keto-3-deoxy-gluconate (KDG) from pyruvate and glyceraldehyde. May also function as a 2-dehydro-3-deoxy-D-pentonate aldolase. Overexpression leads to increased growth (over 2 hours) in the presence of the antibiotics norfloxacin, ampicillin and streptomycin. This is Putative 2-dehydro-3-deoxy-D-gluconate aldolase YagE (yagE) from Escherichia coli (strain K12).